The sequence spans 368 residues: Divinyl chlorophyll a/b light-harvesting protein PcbA (368 aa).

6 helical membrane passes run 27–47 (FIAS…ANTL), 63–83 (GFVV…NGVI), 89–109 (MLVV…GAML), 203–223 (VMGG…WHIF), 243–263 (FVLS…AFWA), and 307–327 (LSNF…WHGL).

The protein belongs to the PsbB/PsbC family. IsiA/Pcb subfamily. As to quaternary structure, the antenna complex consists of divinyl chlorophylls (a and b) and divinyl chlorophyll a/b binding proteins. Forms complexes with PSII, consisting of a PSII dimer and 4 or 8 PcbA subunits. These complexes are also found under conditions of iron-starvation. It depends on divinyl chlorophyll a as a cofactor. Divinyl chlorophyll b serves as cofactor.

The protein resides in the cellular thylakoid membrane. Its function is as follows. The antenna complex functions as a light receptor, it captures and delivers excitation energy to photosystems II. The Prochlorales pcb genes are not related to higher plant LHCs. In Prochlorococcus marinus (strain MIT 9313), this protein is Divinyl chlorophyll a/b light-harvesting protein PcbA (pcbA).